Here is a 298-residue protein sequence, read N- to C-terminus: MIIKRREYMRIADYSVTKAVLDRHGFTFKKSFGQNFLTDTNILQKIVDTAEIDQNVNVIEIGPGIGALTEFLAENAAEVMAFEIDDRLVPILADTLRDFDNVQVVNQDILKADLQTQIKQFKNPDLPIKVVANLPYYITTPILMHLIESKIPFQEFVVMMQREVADRISAEPNTKAYGSLSIAVQYYMTAKVAFIVPRTVFVPAPNVDSAILKMVRRDQPLIEVKDEDFFFRVSRLSFVHRRKTLWNNLTSHFGKSEDIKAKLEKGLALADIKPSIRGEALSIQDFGKLADALKEVGL.

6 residues coordinate S-adenosyl-L-methionine: N35, L37, G62, E83, D108, and N133.

This sequence belongs to the class I-like SAM-binding methyltransferase superfamily. rRNA adenine N(6)-methyltransferase family. RsmA subfamily.

The protein resides in the cytoplasm. It catalyses the reaction adenosine(1518)/adenosine(1519) in 16S rRNA + 4 S-adenosyl-L-methionine = N(6)-dimethyladenosine(1518)/N(6)-dimethyladenosine(1519) in 16S rRNA + 4 S-adenosyl-L-homocysteine + 4 H(+). In terms of biological role, specifically dimethylates two adjacent adenosines (A1518 and A1519) in the loop of a conserved hairpin near the 3'-end of 16S rRNA in the 30S particle. May play a critical role in biogenesis of 30S subunits. The sequence is that of Ribosomal RNA small subunit methyltransferase A from Streptococcus pyogenes serotype M12 (strain MGAS9429).